We begin with the raw amino-acid sequence, 338 residues long: 4-hydroxythreonine-4-phosphate dehydrogenase (338 aa).

The substrate site is built by histidine 139 and threonine 140. A divalent metal cation is bound by residues histidine 169, histidine 214, and histidine 270. Substrate is bound by residues lysine 278, asparagine 287, and arginine 296.

The protein belongs to the PdxA family. In terms of assembly, homodimer. Zn(2+) is required as a cofactor. The cofactor is Mg(2+). It depends on Co(2+) as a cofactor.

Its subcellular location is the cytoplasm. It catalyses the reaction 4-(phosphooxy)-L-threonine + NAD(+) = 3-amino-2-oxopropyl phosphate + CO2 + NADH. The protein operates within cofactor biosynthesis; pyridoxine 5'-phosphate biosynthesis; pyridoxine 5'-phosphate from D-erythrose 4-phosphate: step 4/5. Catalyzes the NAD(P)-dependent oxidation of 4-(phosphooxy)-L-threonine (HTP) into 2-amino-3-oxo-4-(phosphooxy)butyric acid which spontaneously decarboxylates to form 3-amino-2-oxopropyl phosphate (AHAP). The protein is 4-hydroxythreonine-4-phosphate dehydrogenase of Desulfosudis oleivorans (strain DSM 6200 / JCM 39069 / Hxd3) (Desulfococcus oleovorans).